The following is a 106-amino-acid chain: Iron-sulfur cluster assembly protein CyaY (106 aa).

This sequence belongs to the frataxin family.

Functionally, involved in iron-sulfur (Fe-S) cluster assembly. May act as a regulator of Fe-S biogenesis. The protein is Iron-sulfur cluster assembly protein CyaY of Klebsiella pneumoniae subsp. pneumoniae (strain ATCC 700721 / MGH 78578).